A 434-amino-acid chain; its full sequence is Sodium/bile acid cotransporter 5 (434 aa).

Residues 1–18 (MSGNFFIFLLLLVTPGEA) form the signal peptide. Topologically, residues 19–129 (KKSFLSFLNI…VRVFRQTDDS (111 aa)) are extracellular. N-linked (GlcNAc...) asparagine glycans are attached at residues asparagine 73 and asparagine 96. A helical transmembrane segment spans residues 130–150 (LLQAPIHVDSSIFLLVLSMIL). Residues 151–172 (LNKCAFGCKIEFQVLQTVWKRP) lie on the Cytoplasmic side of the membrane. Residues 173–193 (LPILLGVVIQFFLMPFCGFLL) traverse the membrane as a helical segment. At 194–203 (SQILGLPKAQ) the chain is on the extracellular side. The chain crosses the membrane as a helical span at residues 204 to 226 (AFGFVMTCTCPGGGGGYLFALLL). Over 227–232 (EGDVTL) the chain is Cytoplasmic. A helical transmembrane segment spans residues 233-255 (AILMTCTSTSLALIMMPVNSYFY). Topologically, residues 256–268 (SRLLGLAGAFHVP) are extracellular. A helical transmembrane segment spans residues 269 to 289 (VLKIVSTLLFILMPMSTGVII). The Cytoplasmic segment spans residues 290–306 (KHKMPAKAICLERVVRP). The helical transmembrane segment at 307–327 (LSLTLMFVGIYLAFRMGLVFL) threads the bilayer. The Extracellular portion of the chain corresponds to 328–331 (RMAN). A helical membrane pass occupies residues 332–352 (LEVFLLGLLVPALGLLFGYSL). Residues 353–365 (AKVYLLPLPVCKT) are Cytoplasmic-facing. Residues 366–386 (VALETGMLNSFLALAIIQLSF) form a helical membrane-spanning segment. Topologically, residues 387-395 (SQPKAHEAS) are extracellular. Residues 396 to 416 (VAPFTVAMCSSCEMLLLLLVY) form a helical membrane-spanning segment. Residues 417-434 (KAKRRPSLSTEYEKTPLV) are Cytoplasmic-facing.

Belongs to the bile acid:sodium symporter (BASS) (TC 2.A.28) family.

It is found in the membrane. This Mus musculus (Mouse) protein is Sodium/bile acid cotransporter 5 (Slc10a5).